We begin with the raw amino-acid sequence, 241 residues long: Putative lipoprotein YvcA (241 aa).

An N-terminal signal peptide occupies residues 1–18 (MKKIIFICFSLLLALTGG). Cys-19 is lipidated: N-palmitoyl cysteine. Cys-19 carries the S-diacylglycerol cysteine lipid modification. Residues 22–48 (NDNDKNSTNDNKTEAVKPKDMDPKDLP) form a disordered region. The span at 23 to 46 (DNDKNSTNDNKTEAVKPKDMDPKD) shows a compositional bias: basic and acidic residues.

It is found in the cell membrane. Functionally, required for complex colony architecture. This chain is Putative lipoprotein YvcA (yvcA), found in Bacillus subtilis (strain 168).